Consider the following 184-residue polypeptide: MKNVTDSFVSLGDWPYAGSFAFNTDILATNPINLSVVLGVLIFFGKGVLSDLLDNRKQKILSSIRNSEELRAKAIEQLEKARARLRKVEIEADKFRVNGYSEIEREKGNLINSTYENLQRLENYKNEAIQFEQQRTINQVRQRVFQQALQEALETLNSCLNSELHLRTISANIVMLGVMKEITD.

Residues L27–L49 traverse the membrane as a helical segment.

Belongs to the ATPase B chain family. In terms of assembly, F-type ATPases have 2 components, F(1) - the catalytic core - and F(0) - the membrane proton channel. F(1) has five subunits: alpha(3), beta(3), gamma(1), delta(1), epsilon(1). F(0) has four main subunits: a(1), b(1), b'(1) and c(10-14). The alpha and beta chains form an alternating ring which encloses part of the gamma chain. F(1) is attached to F(0) by a central stalk formed by the gamma and epsilon chains, while a peripheral stalk is formed by the delta, b and b' chains.

Its subcellular location is the plastid. The protein resides in the chloroplast thylakoid membrane. F(1)F(0) ATP synthase produces ATP from ADP in the presence of a proton or sodium gradient. F-type ATPases consist of two structural domains, F(1) containing the extramembraneous catalytic core and F(0) containing the membrane proton channel, linked together by a central stalk and a peripheral stalk. During catalysis, ATP synthesis in the catalytic domain of F(1) is coupled via a rotary mechanism of the central stalk subunits to proton translocation. Its function is as follows. Component of the F(0) channel, it forms part of the peripheral stalk, linking F(1) to F(0). The polypeptide is ATP synthase subunit b, chloroplastic (Ceratophyllum demersum (Rigid hornwort)).